The chain runs to 467 residues: ATP-dependent protease ATPase subunit HslU (467 aa).

Residues V22 and 64-69 each bind ATP; that span reads GVGKTE. The interval 149-192 is disordered; that stretch reads QTNNPLESLFGGAIPNFGQNNEDEEEPPTEEIKTKRSEIKRQLE. Basic and acidic residues predominate over residues 178–192; that stretch reads EEIKTKRSEIKRQLE. Residues D280, E345, and R417 each coordinate ATP.

This sequence belongs to the ClpX chaperone family. HslU subfamily. A double ring-shaped homohexamer of HslV is capped on each side by a ring-shaped HslU homohexamer. The assembly of the HslU/HslV complex is dependent on binding of ATP.

It localises to the cytoplasm. Functionally, ATPase subunit of a proteasome-like degradation complex; this subunit has chaperone activity. The binding of ATP and its subsequent hydrolysis by HslU are essential for unfolding of protein substrates subsequently hydrolyzed by HslV. HslU recognizes the N-terminal part of its protein substrates and unfolds these before they are guided to HslV for hydrolysis. In Staphylococcus aureus (strain MW2), this protein is ATP-dependent protease ATPase subunit HslU.